The primary structure comprises 427 residues: 3-phosphoshikimate 1-carboxyvinyltransferase (427 aa).

The 3-phosphoshikimate site is built by Lys22, Ser23, and Arg27. A phosphoenolpyruvate-binding site is contributed by Lys22. Positions 96 and 124 each coordinate phosphoenolpyruvate. 7 residues coordinate 3-phosphoshikimate: Ser169, Ser170, Gln171, Ser197, Asp313, Asn336, and Lys340. Gln171 lines the phosphoenolpyruvate pocket. Asp313 (proton acceptor) is an active-site residue. 3 residues coordinate phosphoenolpyruvate: Arg344, Arg386, and Lys411.

It belongs to the EPSP synthase family. As to quaternary structure, monomer.

The protein localises to the cytoplasm. It catalyses the reaction 3-phosphoshikimate + phosphoenolpyruvate = 5-O-(1-carboxyvinyl)-3-phosphoshikimate + phosphate. Its pathway is metabolic intermediate biosynthesis; chorismate biosynthesis; chorismate from D-erythrose 4-phosphate and phosphoenolpyruvate: step 6/7. Functionally, catalyzes the transfer of the enolpyruvyl moiety of phosphoenolpyruvate (PEP) to the 5-hydroxyl of shikimate-3-phosphate (S3P) to produce enolpyruvyl shikimate-3-phosphate and inorganic phosphate. The protein is 3-phosphoshikimate 1-carboxyvinyltransferase of Escherichia coli O1:K1 / APEC.